Reading from the N-terminus, the 615-residue chain is UvrABC system protein C (615 aa).

Residues 12–91 (EKPGVYIMKD…IKKYKPKYNV (80 aa)) form the GIY-YIG domain. The UVR domain occupies 203 to 238 (DWLIQKLKEDMKKAAEELRFEEAARIRDQIFAIERT).

It belongs to the UvrC family. As to quaternary structure, interacts with UvrB in an incision complex.

Its subcellular location is the cytoplasm. In terms of biological role, the UvrABC repair system catalyzes the recognition and processing of DNA lesions. UvrC both incises the 5' and 3' sides of the lesion. The N-terminal half is responsible for the 3' incision and the C-terminal half is responsible for the 5' incision. This chain is UvrABC system protein C, found in Thermoanaerobacter sp. (strain X514).